The following is a 448-amino-acid chain: Glucose-6-phosphate isomerase (448 aa).

The Proton donor role is filled by Glu290. Catalysis depends on residues His311 and Lys425.

This sequence belongs to the GPI family.

Its subcellular location is the cytoplasm. It catalyses the reaction alpha-D-glucose 6-phosphate = beta-D-fructose 6-phosphate. The protein operates within carbohydrate biosynthesis; gluconeogenesis. Its pathway is carbohydrate degradation; glycolysis; D-glyceraldehyde 3-phosphate and glycerone phosphate from D-glucose: step 2/4. Functionally, catalyzes the reversible isomerization of glucose-6-phosphate to fructose-6-phosphate. This Acetivibrio thermocellus (strain ATCC 27405 / DSM 1237 / JCM 9322 / NBRC 103400 / NCIMB 10682 / NRRL B-4536 / VPI 7372) (Clostridium thermocellum) protein is Glucose-6-phosphate isomerase.